We begin with the raw amino-acid sequence, 463 residues long: RuvB-like helicase 2 (463 aa).

76–83 contributes to the ATP binding site; that stretch reads GPPSTGKT.

This sequence belongs to the RuvB family. In terms of assembly, may form heterododecamers with RVB1. Component of the SWR1 chromatin remodeling complex, the INO80 chromatin remodeling complex, and of the R2TP complex.

Its subcellular location is the nucleus. It catalyses the reaction ATP + H2O = ADP + phosphate + H(+). In terms of biological role, DNA helicase which participates in several chromatin remodeling complexes, including the SWR1 and the INO80 complexes. The SWR1 complex mediates the ATP-dependent exchange of histone H2A for the H2A variant HZT1 leading to transcriptional regulation of selected genes by chromatin remodeling. The INO80 complex remodels chromatin by shifting nucleosomes and is involved in DNA repair. Also involved in pre-rRNA processing. The chain is RuvB-like helicase 2 (RVB2) from Cryptococcus neoformans var. neoformans serotype D (strain JEC21 / ATCC MYA-565) (Filobasidiella neoformans).